We begin with the raw amino-acid sequence, 855 residues long: Putative AAA family ATPase R476 (855 aa).

Residues 1-13 show a composition bias toward basic and acidic residues; the sequence is MNKRDFSELKNSE. The tract at residues 1-37 is disordered; sequence MNKRDFSELKNSESSEESSLVSSTETVRSSKRNKKFH. Positions 17 to 27 are enriched in low complexity; sequence ESSLVSSTETV. 610–617 contributes to the ATP binding site; the sequence is GPPGTGKT.

It belongs to the AAA ATPase family.

The chain is Putative AAA family ATPase R476 from Acanthamoeba polyphaga mimivirus (APMV).